A 423-amino-acid polypeptide reads, in one-letter code: UDP-N-acetylgalactosamine-undecaprenyl-phosphate N-acetylgalactosaminephosphotransferase (423 aa).

The Extracellular portion of the chain corresponds to 1–13 (MSYQRRHSRWYER). A helical transmembrane segment spans residues 14 to 34 (VLFSPPSLFFLGAMLAVCLPA). Over 35–47 (LERWGWGFWEYFD) the chain is Cytoplasmic. The chain crosses the membrane as a helical span at residues 48–68 (AVRVNTLGGAFVAFLLTGIVL). Residues 69 to 79 (YRFLRYPGASP) lie on the Extracellular side of the membrane. Residues 80–100 (VAYMIPTVTTLYGSLVGALFF) form a helical membrane-spanning segment. The Cytoplasmic segment spans residues 101 to 107 (LRLPYSR). Residues 108–128 (QVLFESYVVALLCCWVVYFIG) form a helical membrane-spanning segment. Residues 129 to 239 (RRYRTPKYAL…IYAFIKRGMD (111 aa)) lie on the Extracellular side of the membrane. Residues 240–260 (ILAAVIAIPLFSPLMLATAVL) form a helical membrane-spanning segment. Residues 261 to 423 (IKLESPGPVM…RTILTGFGAR (163 aa)) lie on the Cytoplasmic side of the membrane.

Belongs to the bacterial sugar transferase family.

It localises to the membrane. It carries out the reaction di-trans,octa-cis-undecaprenyl phosphate + UDP-N-acetyl-alpha-D-galactosamine = N-acetyl-alpha-D-galactosaminyl-di-trans,octa-cis-undecaprenyl diphosphate + UMP. Its pathway is bacterial outer membrane biogenesis; LPS O-antigen biosynthesis. In terms of biological role, transfers N-acetyl-galactosamine (GalNAc) to undecaprenyl phosphate, a step in the assembly of the repeating-unit of the O-antigen. Shows no activity with UDP-N-acetyl-alpha-D-glucosamine. The chain is UDP-N-acetylgalactosamine-undecaprenyl-phosphate N-acetylgalactosaminephosphotransferase (wecA) from Aeromonas hydrophila.